The primary structure comprises 495 residues: Sialin (495 aa).

Over residues 1 to 18 (MRSPVRDLARNDGEESTD) the composition is skewed to basic and acidic residues. A disordered region spans residues 1–24 (MRSPVRDLARNDGEESTDRTPLLP). At 1-41 (MRSPVRDLARNDGEESTDRTPLLPGAPRAEAAPVCCSARYN) the chain is on the cytoplasmic side. A Phosphoserine modification is found at Ser-3. A Dileucine internalization motif motif is present at residues 22 to 23 (LL). A helical membrane pass occupies residues 42–62 (LAILAFFGFFIVYALRVNLSV). Residues 63–109 (ALVDMVDSNTTLEDNRTSKACPEHSAPIKVHHNQTGKKYQWDAETQG) are Lumenal-facing. 3 N-linked (GlcNAc...) asparagine glycosylation sites follow: Asn-71, Asn-77, and Asn-95. A helical transmembrane segment spans residues 110 to 130 (WILGSFFYGYIITQIPGGYVA). Topologically, residues 131–136 (SKIGGK) are cytoplasmic. A helical membrane pass occupies residues 137–157 (MLLGFGILGTAVLTLFTPIAA). A topological domain (lumenal) is located at residue Asp-158. The helical transmembrane segment at 159–179 (LGVGPLIVLRALEGLGEGVTF) threads the bilayer. Residues 180–200 (PAMHAMWSSWAPPLERSKLLS) are Cytoplasmic-facing. Residues 201–221 (ISYAGAQLGTVISLPLSGIIC) form a helical membrane-spanning segment. The Lumenal segment spans residues 222–227 (YYMNWT). Residues 228 to 248 (YVFYFFGTIGIFWFLLWIWLV) traverse the membrane as a helical segment. Topologically, residues 249 to 279 (SDTPQKHKRISHYEKEYILSSLRNQLSSQKS) are cytoplasmic. Residues 280–300 (VPWVPILKSLPLWAIVVAHFS) form a helical membrane-spanning segment. Topologically, residues 301-328 (YNWTFYTLLTLLPTYMKEILRFNVQENG) are lumenal. The helical transmembrane segment at 329–349 (FLSSLPYLGSWLCMILSGQAA) threads the bilayer. Residues 350–365 (DNLRAKWNFSTLCVRR) are Cytoplasmic-facing. The chain crosses the membrane as a helical span at residues 366-386 (IFSLIGMIGPAVFLVAAGFIG). The Lumenal segment spans residues 387 to 391 (CDYSL). A helical transmembrane segment spans residues 392-412 (AVAFLTISTTLGGFCSSGFSI). At 413–423 (NHLDIAPSYAG) the chain is on the cytoplasmic side. The helical transmembrane segment at 424–444 (ILLGITNTFATIPGMVGPVIA) threads the bilayer. At 445-457 (KSLTPDNTVGEWQ) the chain is on the lumenal side. Residues 458 to 478 (TVFYIAAAINVFGAIFFTLFA) form a helical membrane-spanning segment. Over 479-495 (KGEVQNWALNDHHGHRH) the chain is Cytoplasmic.

This sequence belongs to the major facilitator superfamily. Sodium/anion cotransporter family. In terms of tissue distribution, in the adult, detected in placenta, kidney and pancreas. Abundant in the endothelial cells of tumors from ovary, colon, breast and lung, but is not detected in endothelial cells from the corresponding normal tissues. Highly expressed in salivary glands and liver, with lower levels of expression in brain, spleen kidney, muscle and pancreas. Expressed in acinar cells of salivary glands (at protein level).

It is found in the basolateral cell membrane. The protein resides in the cytoplasmic vesicle. Its subcellular location is the secretory vesicle. It localises to the synaptic vesicle membrane. The protein localises to the lysosome membrane. The catalysed reaction is N-acetylneuraminate(in) + H(+)(in) = N-acetylneuraminate(out) + H(+)(out). It carries out the reaction D-glucuronate(out) + H(+)(out) = D-glucuronate(in) + H(+)(in). It catalyses the reaction 2 nitrate(out) + H(+)(out) = 2 nitrate(in) + H(+)(in). The enzyme catalyses L-aspartate(out) = L-aspartate(in). The catalysed reaction is L-glutamate(out) = L-glutamate(in). It carries out the reaction N-acetyl-L-aspartyl-L-glutamate(out) = N-acetyl-L-aspartyl-L-glutamate(in). In terms of biological role, multifunctional anion transporter that operates via two distinct transport mechanisms, namely proton-coupled anion cotransport and membrane potential-dependent anion transport. Electroneutral proton-coupled acidic monosaccharide symporter, with a sugar to proton stoichiometry of 1:1. Exports glucuronic acid and free sialic acid derived from sialoglycoconjugate degradation out of lysosomes, driven by outwardly directed lysosomal pH gradient. May regulate lysosome function and metabolism of sialylated conjugates that impact oligodendrocyte lineage differentiation and myelinogenesis in the central nervous system. Electrogenic proton-coupled nitrate symporter that transports nitrate ions across the basolateral membrane of salivary gland acinar cells, with nitrate to proton stoichiometry of 2:1. May contribute to nitrate clearance from serum by salivary glands, where it is further concentrated and secreted in the saliva. Uses membrane potential to drive the uptake of acidic amino acids and peptides into synaptic vesicles. Responsible for synaptic vesicular storage of L-aspartate and L-glutamate in pinealocytes as well as vesicular uptake of N-acetyl-L-aspartyl-L-glutamate neuropeptide, relevant to aspartegic-associated glutamatergic neurotransmission and activation of metabotropic receptors that inhibit subsequent transmitter release. Receptor for CM101, a polysaccharide produced by group B Streptococcus with antipathoangiogenic properties. The polypeptide is Sialin (SLC17A5) (Homo sapiens (Human)).